Here is a 503-residue protein sequence, read N- to C-terminus: MLLADVVATSTAVAATRSRTAKVAAIAGLLRGLDPADAELTAVVAAYLGGSLRQRRTGLGGRSLSGLPAPAGEASLEVAEVDRRFEEVAALSGPGSAGRRAAAVADLFARATGEEQRWLRGVVAGELRQGALDALVQDAAAAVAGVPGPDVRRAAMLAGSTVQAVVAALRGGAAELAGFGLHVGRPLLPMLAASTTSVAEAVAGFAGPVAVDTKLDGIRIQVHRGPEGVRIATRTLEDITARLPEVVEVVRELPARAFVLDGEALVLDGSGRPKAFQDTASRTAQASGDAVVPYFFDVLHLDGADLLDVALRERLAALDGFVPPRWRTPRLVTADPAAAAEFAAQALAGGHEGVVVKDLDSPYAAGRRGGAWVKVKPVHTLDLVVLAVERGSGRRAGWLSNVHLGARDPATGGFVMLGKTFKGMTDETLAWQTARFRELQTGEDGYVVTVRPEQVVEVAFDGLQRSTRYPGGVALRFARVVRYREDKTAAEADTLETVLALAR.

ATP is bound at residue aspartate 212. Lysine 214 (N6-AMP-lysine intermediate) is an active-site residue. ATP is bound by residues arginine 219, arginine 234, glutamate 263, phenylalanine 296, arginine 368, and lysine 374.

Belongs to the ATP-dependent DNA ligase family. It depends on Mg(2+) as a cofactor.

It carries out the reaction ATP + (deoxyribonucleotide)n-3'-hydroxyl + 5'-phospho-(deoxyribonucleotide)m = (deoxyribonucleotide)n+m + AMP + diphosphate.. DNA ligase that seals nicks in double-stranded DNA during DNA replication, DNA recombination and DNA repair. This chain is Probable DNA ligase, found in Kineococcus radiotolerans (strain ATCC BAA-149 / DSM 14245 / SRS30216).